A 752-amino-acid chain; its full sequence is Complement C2 (752 aa).

The signal sequence occupies residues 1-20 (MGPLMVLFCLLFVYTGLADS). Sushi domains are found at residues 22–86 (PSCP…VCKP), 87–146 (VRCP…VCDN), and 149–206 (GHCP…ICRQ). 6 cysteine pairs are disulfide-bonded: Cys24–Cys64, Cys51–Cys84, Cys89–Cys131, Cys117–Cys144, Cys151–Cys191, and Cys177–Cys204. Asn29 carries an N-linked (GlcNAc...) asparagine glycan. N-linked (GlcNAc...) asparagine glycosylation occurs at Asn112. The 199-residue stretch at 254-452 (NLYLLLDCSQ…KALHQVFEHM (199 aa)) folds into the VWFA domain. Positions 260 to 264 (DCSQS) match the MIDAS-like motif motif. Mg(2+)-binding residues include Ser262 and Ser264. Residues Asn290 and Asn333 are each glycosylated (N-linked (GlcNAc...) asparagine). Position 337 (Thr337) interacts with Mg(2+). Cystine bridges form between Cys463/Cys581, Cys492/Cys508, and Cys584/Cys600. Residues 464–744 (GVGNMSANAS…MQPWLRQHLG (281 aa)) enclose the Peptidase S1 domain. 2 N-linked (GlcNAc...) asparagine glycosylation sites follow: Asn467 and Asn471. Catalysis depends on charge relay system residues His507 and Asp561. N-linked (GlcNAc...) asparagine glycans are attached at residues Asn621 and Asn651. 2 disulfide bridges follow: Cys638/Cys665 and Cys675/Cys705. The Charge relay system role is filled by Ser679.

Belongs to the peptidase S1 family. Serine protease component of the C3 convertase, also named C4bC2b, composed of the serine protease complement C2b and complement C4b. Serine protease component of the C5 convertase, also named C4bC2bC3b, composed of the serine protease complement C2b, complement C3b, as well as complement C4b. Requires Mg(2+) as cofactor. It depends on Mn(2+) as a cofactor. Cleaved and activated by different proteases depending on the complement pathway to generate complement C2a and serine protease complement C2b chains. Cleaved and activated by C1S following activation by the classical complement system. Cleaved and activated by MASP2 following activation by the lectin complement system. Cleaved and activated by GZMK following activation by the GZMK complement system.

The protein resides in the secreted. It localises to the cell surface. The enzyme catalyses Selective cleavage of Arg-|-Ser bond in complement component C3 alpha-chain to form C3a and C3b, and Arg-|-Xaa bond in complement component C5 alpha-chain to form C5a and C5b.. In terms of biological role, precursor of the catalytic component of the C3 and C5 convertase complexes, which are part of the complement pathway, a cascade of proteins that leads to phagocytosis and breakdown of pathogens and signaling that strengthens the adaptive immune system. Component C2 is part of the classical, lectin and GZMK complement systems. Its function is as follows. Catalytic component of the complement C3 and C5 convertase complexes. Following complement activation, recruited to the surface of pathogens by complement C4b opsonin to form the C3 convertase, or C3b and C4b opsonins to form the C5 convertase. As part of the C3 convertase, cleaves and activate C3 into C3a anaphylatoxin and C3b opsonin, the next components of the complement pathways. As part of the C5 convertase, cleaves and activate C5 into C5a anaphylatoxin and C5b component of the membrane attack complex. The polypeptide is Complement C2 (Gorilla gorilla gorilla (Western lowland gorilla)).